Consider the following 157-residue polypeptide: 6,7-dimethyl-8-ribityllumazine synthase (157 aa).

5-amino-6-(D-ribitylamino)uracil contacts are provided by residues F22, 57-59 (AYE), and 81-83 (TVI). 86–87 (GT) serves as a coordination point for (2S)-2-hydroxy-3-oxobutyl phosphate. The active-site Proton donor is H89. 5-amino-6-(D-ribitylamino)uracil is bound at residue F114. (2S)-2-hydroxy-3-oxobutyl phosphate is bound at residue R128.

The protein belongs to the DMRL synthase family. Forms an icosahedral capsid composed of 60 subunits, arranged as a dodecamer of pentamers.

It catalyses the reaction (2S)-2-hydroxy-3-oxobutyl phosphate + 5-amino-6-(D-ribitylamino)uracil = 6,7-dimethyl-8-(1-D-ribityl)lumazine + phosphate + 2 H2O + H(+). The protein operates within cofactor biosynthesis; riboflavin biosynthesis; riboflavin from 2-hydroxy-3-oxobutyl phosphate and 5-amino-6-(D-ribitylamino)uracil: step 1/2. Functionally, catalyzes the formation of 6,7-dimethyl-8-ribityllumazine by condensation of 5-amino-6-(D-ribitylamino)uracil with 3,4-dihydroxy-2-butanone 4-phosphate. This is the penultimate step in the biosynthesis of riboflavin. The protein is 6,7-dimethyl-8-ribityllumazine synthase of Haemophilus influenzae (strain ATCC 51907 / DSM 11121 / KW20 / Rd).